The following is a 116-amino-acid chain: Beta-2-microglobulin (116 aa).

The first 19 residues, 1-19 (MRAIITFALFCVLYVTVQG), serve as a signal peptide directing secretion. The region spanning 24–110 (PKVQVYSHFP…VRHMNNKNIY (87 aa)) is the Ig-like C1-type domain. A disulfide bridge links cysteine 44 with cysteine 99.

This sequence belongs to the beta-2-microglobulin family. As to quaternary structure, heterodimer of an alpha chain and a beta chain. Beta-2-microglobulin is the beta-chain of major histocompatibility complex class I molecules.

It is found in the secreted. Its function is as follows. Component of the class I major histocompatibility complex (MHC). Involved in the presentation of peptide antigens to the immune system. This is Beta-2-microglobulin (b2m) from Cyprinus carpio (Common carp).